A 269-amino-acid chain; its full sequence is uncharacterized protein (269 aa).

Over residues Q181–A191 the composition is skewed to basic and acidic residues. Positions Q181–G203 are disordered. Positions S193 to M202 are enriched in polar residues. Phosphoserine is present on S200.

This is an uncharacterized protein from Schizosaccharomyces pombe (strain 972 / ATCC 24843) (Fission yeast).